The following is a 240-amino-acid chain: 4-hydroxy-tetrahydrodipicolinate reductase (240 aa).

NAD(+) is bound by residues 79–81 and 103–106; these read ATT and SANM. His-135 (proton donor/acceptor) is an active-site residue. A (S)-2,3,4,5-tetrahydrodipicolinate-binding site is contributed by His-136. Lys-139 (proton donor) is an active-site residue. 145-146 is a (S)-2,3,4,5-tetrahydrodipicolinate binding site; it reads GT.

It belongs to the DapB family.

It is found in the cytoplasm. It catalyses the reaction (S)-2,3,4,5-tetrahydrodipicolinate + NAD(+) + H2O = (2S,4S)-4-hydroxy-2,3,4,5-tetrahydrodipicolinate + NADH + H(+). It carries out the reaction (S)-2,3,4,5-tetrahydrodipicolinate + NADP(+) + H2O = (2S,4S)-4-hydroxy-2,3,4,5-tetrahydrodipicolinate + NADPH + H(+). Its pathway is amino-acid biosynthesis; L-lysine biosynthesis via DAP pathway; (S)-tetrahydrodipicolinate from L-aspartate: step 4/4. In terms of biological role, catalyzes the conversion of 4-hydroxy-tetrahydrodipicolinate (HTPA) to tetrahydrodipicolinate. The protein is 4-hydroxy-tetrahydrodipicolinate reductase of Staphylococcus epidermidis (strain ATCC 12228 / FDA PCI 1200).